Here is a 323-residue protein sequence, read N- to C-terminus: CTD kinase subunit beta (323 aa).

The protein belongs to the cyclin family. As to quaternary structure, CTDK-I consists of three subunits, CTK1, CTK2 and CTK3 (also called alpha, beta and gamma). Interacts with CTK1. Heterodimerization with CTK3 is required to protect this subunit from degradation. In terms of processing, phosphorylated. Ubiquitinated. Phosphorylation and ubiquitination lead to degradation in growth-related way by the ubiquitin-proteasome pathway. Neither phosphorylation nor degradation requires association with CTK1.

Its subcellular location is the nucleus. It localises to the nucleolus. In terms of biological role, cyclin subunit of the CTDK-I complex, which hyperphosphorylates the C-terminal heptapeptide repeat domain (CTD) of the largest RNA polymerase II subunit. CTDK-I phosphorylates 'Ser-5' if the CTD substrate is not phosphorylated at 'Ser-5', but will phosphorylate 'Ser-2' of a CTD substrate if 'Ser-5' is already phosphorylated. CTDK-I is also more reactive toward substrates that are prephosphorylated at 'Ser-2' or 'Ser-5' compared with an unphosphorylated CTD substrate, therefore efficiently creating doubly phosphorylated CTD repeats. Involved in RNA polymerase II transcriptional elongation, and as part of the CTDK-I complex, pre-mRNA 3'-end processing and SET2 mediated H3K36 methylation. Together with CTK3, required for CTK1 CTD kinase activation. Required for DNA damage induced transcription. Involved in the adaptation to alternative carbon sources, including galactose, glycerol and ethanol, but not raffinose. Required for the integrity of the rDNA locus. The sequence is that of CTD kinase subunit beta (CTK2) from Saccharomyces cerevisiae (strain ATCC 204508 / S288c) (Baker's yeast).